Here is a 152-residue protein sequence, read N- to C-terminus: Xanthine-guanine phosphoribosyltransferase (152 aa).

Residues 37–38 (RG) and 88–96 (DDLVDTGGT) contribute to the 5-phospho-alpha-D-ribose 1-diphosphate site. D89 serves as a coordination point for Mg(2+). Guanine is bound by residues D92 and I135. D92 and I135 together coordinate xanthine. Residues 92-96 (DTGGT) and 134-135 (WI) each bind GMP.

This sequence belongs to the purine/pyrimidine phosphoribosyltransferase family. XGPT subfamily. In terms of assembly, homotetramer. Requires Mg(2+) as cofactor.

The protein resides in the cell inner membrane. It catalyses the reaction GMP + diphosphate = guanine + 5-phospho-alpha-D-ribose 1-diphosphate. It carries out the reaction XMP + diphosphate = xanthine + 5-phospho-alpha-D-ribose 1-diphosphate. The enzyme catalyses IMP + diphosphate = hypoxanthine + 5-phospho-alpha-D-ribose 1-diphosphate. It participates in purine metabolism; GMP biosynthesis via salvage pathway; GMP from guanine: step 1/1. It functions in the pathway purine metabolism; XMP biosynthesis via salvage pathway; XMP from xanthine: step 1/1. In terms of biological role, purine salvage pathway enzyme that catalyzes the transfer of the ribosyl-5-phosphate group from 5-phospho-alpha-D-ribose 1-diphosphate (PRPP) to the N9 position of the 6-oxopurines guanine and xanthine to form the corresponding ribonucleotides GMP (guanosine 5'-monophosphate) and XMP (xanthosine 5'-monophosphate), with the release of PPi. To a lesser extent, also acts on hypoxanthine. The protein is Xanthine-guanine phosphoribosyltransferase of Yersinia enterocolitica serotype O:8 / biotype 1B (strain NCTC 13174 / 8081).